The primary structure comprises 369 residues: Uroporphyrinogen decarboxylase (369 aa).

Substrate is bound by residues R28–R32, D78, Y154, S209, and H339.

It belongs to the uroporphyrinogen decarboxylase family. Homodimer.

Its subcellular location is the cytoplasm. It carries out the reaction uroporphyrinogen III + 4 H(+) = coproporphyrinogen III + 4 CO2. The protein operates within porphyrin-containing compound metabolism; protoporphyrin-IX biosynthesis; coproporphyrinogen-III from 5-aminolevulinate: step 4/4. Its function is as follows. Catalyzes the decarboxylation of four acetate groups of uroporphyrinogen-III to yield coproporphyrinogen-III. The sequence is that of Uroporphyrinogen decarboxylase from Polaromonas naphthalenivorans (strain CJ2).